A 367-amino-acid chain; its full sequence is Peptide chain release factor 2 (367 aa).

Gln254 bears the N5-methylglutamine mark.

It belongs to the prokaryotic/mitochondrial release factor family. Post-translationally, methylated by PrmC. Methylation increases the termination efficiency of RF2.

The protein localises to the cytoplasm. Peptide chain release factor 2 directs the termination of translation in response to the peptide chain termination codons UGA and UAA. The sequence is that of Peptide chain release factor 2 from Aromatoleum aromaticum (strain DSM 19018 / LMG 30748 / EbN1) (Azoarcus sp. (strain EbN1)).